We begin with the raw amino-acid sequence, 3625 residues long: Cubilin (3625 aa).

The first 20 residues, 1–20 (MVNNMSLLFLWSLVIFLTFA), serve as a signal peptide directing secretion. Residues 21 to 36 (ESYGEAGGPELQRHKR) constitute a propeptide, removed in mature form. The interaction with AMN stretch occupies residues 43 to 50 (PRMAAERG). Residue N106 is glycosylated (N-linked (GlcNAc...) asparagine). Residues 133–169 (DGKVCSSNPCQNGATCLNLHDSFFCICPSQWKGPLCS) enclose the EGF-like 1 domain. Disulfide bonds link C137/C148, C142/C157, C159/C168, C175/C191, C185/C200, and C202/C211. An EGF-like 2; calcium-binding domain is found at 171-212 (DVNECEIYSGTPLGCQNGATCINTPGSYSCLCSPETHGPQCA). Residue N257 is glycosylated (N-linked (GlcNAc...) asparagine). Positions 264 to 305 (DRDECSSWPAPCSALVPCFNTLGSFYCGACPTGWQGNGYICE) constitute an EGF-like 3; calcium-binding domain. Disulfide bonds link C268–C281, C275–C290, C293–C304, C310–C325, C317–C334, C337–C348, C354–C367, C361–C377, C379–C393, C400–C410, C405–C419, C421–C430, C437–C448, C442–C457, C459–C468, C475–C501, C528–C550, C591–C617, C644–C666, and C709–C734. The EGF-like 4; calcium-binding domain maps to 306 to 349 (DINECEINNGGCSVAPPVECVNTPGSYYCPSCPPGYQGDGRMCT). EGF-like domains lie at 350 to 394 (LIDL…HGCV) and 396 to 431 (LSNV…MNCT). N429 is a glycosylation site (N-linked (GlcNAc...) asparagine). Residues 433 to 469 (NINECLSNPCLNGGTCVDGINAFSCECTRFWTGSLCH) form the EGF-like 7; calcium-binding domain. 27 CUB domains span residues 475–587 (CGGT…WETR), 591–703 (CGGV…YLTT), 709–816 (CGGN…YQVA), 817–928 (CGGE…FSTE), 932–1042 (CGEI…YEAT), 1045–1163 (SAGN…WDGS), 1167–1279 (CGGN…YQQT), 1280–1391 (CDNV…WLVH), 1393–1508 (CGGE…WRAV), 1512–1621 (CGGI…FRQA), 1622–1736 (CGGH…YVAS), 1740–1852 (CGGI…FNNI), 1854–1965 (GNDH…WFAM), 1980–2093 (CGGF…FHKS), 2094–2215 (CGGY…YEAK), 2219–2336 (CGGN…YSIA), 2338–2450 (CGGT…FDSS), 2454–2567 (CGGD…YTSS), 2572–2689 (CGGS…YSFT), 2691–2803 (CGGI…WNTE), 2807–2921 (CGGI…FLSR), 2922–3037 (CGRN…YRIT), 3039–3152 (CGGT…FRET), 3159–3276 (CGGY…YTLL), 3280–3397 (CGGT…IAGC), 3397–3509 (CSRE…WTSS), and 3513–3625 (CGGT…TWAS). 2 N-linked (GlcNAc...) asparagine glycosylation sites follow: N712 and N749. C761 and C779 form a disulfide bridge. Residue N781 is glycosylated (N-linked (GlcNAc...) asparagine). An intrachain disulfide couples C817 to C842. N857 carries an N-linked (GlcNAc...) asparagine glycan. Cystine bridges form between C869–C891 and C932–C958. A glycan (N-linked (GlcNAc...) asparagine) is linked at N957. Residue E980 participates in Ca(2+) binding. A glycan (N-linked (GlcNAc...) asparagine) is linked at N984. C985 and C1005 are joined by a disulfide. Ca(2+) contacts are provided by D988, D1027, D1029, and L1030. An N-linked (GlcNAc...) asparagine glycan is attached at N1048. Positions 1097, 1107, and 1148 each coordinate Ca(2+). A disulfide bridge connects residues C1104 and C1126. An intrachain disulfide couples C1167 to C1193. N-linked (GlcNAc...) asparagine glycosylation occurs at N1170. Residue E1215 participates in Ca(2+) binding. A glycan (N-linked (GlcNAc...) asparagine) is linked at N1219. A disulfide bridge connects residues C1220 and C1242. Positions 1223, 1264, 1266, and 1267 each coordinate Ca(2+). Residues C1280 and C1308 are joined by a disulfide bond. Residues N1287, N1309, and N1321 are each glycosylated (N-linked (GlcNAc...) asparagine). Position 1330 (E1330) interacts with Ca(2+). The N-linked (GlcNAc...) asparagine glycan is linked to N1334. Cysteines 1335 and 1353 form a disulfide. D1338, D1375, and V1377 together coordinate Ca(2+). 2 disulfide bridges follow: C1393/C1419 and C1446/C1468. The N-linked (GlcNAc...) asparagine glycan is linked to N1502. A disulfide bridge connects residues C1512 and C1538. N1553 carries an N-linked (GlcNAc...) asparagine glycan. 5 disulfide bridges follow: C1565/C1583, C1622/C1649, C1677/C1699, C1740/C1766, and C1793/C1814. The N-linked (GlcNAc...) asparagine glycan is linked to N1648. 3 N-linked (GlcNAc...) asparagine glycosylation sites follow: N1804, N1821, and N1887. Intrachain disulfides connect C1907/C1929, C1980/C2008, and C2034/C2056. N-linked (GlcNAc...) asparagine glycosylation is found at N2087 and N2119. 2 disulfide bridges follow: C2094-C2120 and C2219-C2249. N2276 carries N-linked (GlcNAc...) asparagine glycosylation. Cystine bridges form between C2277–C2299 and C2338–C2365. N2388 and N2402 each carry an N-linked (GlcNAc...) asparagine glycan. 3 cysteine pairs are disulfide-bonded: C2392–C2413, C2454–C2480, and C2507–C2529. N2533, N2583, N2594, and N2612 each carry an N-linked (GlcNAc...) asparagine glycan. Residues C2572 and C2601 are joined by a disulfide bond. Cystine bridges form between C2630–C2651, C2691–C2717, C2744–C2766, C2807–C2833, and C2862–C2885. N-linked (GlcNAc...) asparagine glycosylation is found at N2887, N2925, N2928, and N2947. 2 disulfide bridges follow: C2922–C2948 and C2979–C3001. A Phosphothreonine modification is found at T3010. 2 cysteine pairs are disulfide-bonded: C3039/C3066 and C3093/C3115. 3 N-linked (GlcNAc...) asparagine glycosylation sites follow: N3044, N3105, and N3127. Cystine bridges form between C3159-C3187 and C3217-C3239. 2 N-linked (GlcNAc...) asparagine glycosylation sites follow: N3270 and N3285. Cystine bridges form between C3280–C3308 and C3334–C3356. N-linked (GlcNAc...) asparagine glycosylation occurs at N3359. Cysteines 3397 and 3423 form a disulfide. Residues N3432, N3459, and N3535 are each glycosylated (N-linked (GlcNAc...) asparagine). 3 cysteine pairs are disulfide-bonded: C3450–C3472, C3513–C3539, and C3566–C3588.

As to quaternary structure, interacts with AMN. Component of the cubam complex composed of one CUBN trimer and one AMN chain. The cubam complex can dimerize. Interacts with LRP2 in a dual-receptor complex in a calcium-dependent manner. Found in a complex with PID1/PCLI1, LRP1 and CUBNI. Interacts with LRP1 and PID1/PCLI1. Post-translationally, the precursor is cleaved by a trans-Golgi proteinase furin, removing a propeptide. In terms of processing, N-glycosylated. As to expression, detected in kidney cortex (at protein level).

It is found in the apical cell membrane. Its subcellular location is the cell membrane. The protein resides in the membrane. It localises to the coated pit. The protein localises to the endosome. It is found in the lysosome membrane. Its function is as follows. Endocytic receptor which plays a role in lipoprotein, vitamin and iron metabolism by facilitating their uptake. Acts together with LRP2 to mediate endocytosis of high-density lipoproteins, GC, hemoglobin, ALB, TF and SCGB1A1. Acts together with AMN to mediate endocytosis of the CBLIF-cobalamin complex. Binds to ALB, MB, Kappa and lambda-light chains, TF, hemoglobin, GC, SCGB1A1, APOA1, high density lipoprotein, and the CBLIF-cobalamin complex. Ligand binding requires calcium. Serves as important transporter in several absorptive epithelia, including intestine, renal proximal tubules and embryonic yolk sac. May play an important role in the development of the peri-implantation embryo through internalization of APOA1 and cholesterol. Binds to LGALS3 at the maternal-fetal interface. This Sus scrofa (Pig) protein is Cubilin (CUBN).